The primary structure comprises 74 residues: Large ribosomal subunit protein uL30 (74 aa).

The protein belongs to the universal ribosomal protein uL30 family. In terms of assembly, part of the 50S ribosomal subunit.

The sequence is that of Large ribosomal subunit protein uL30 from Micrococcus luteus (strain ATCC 4698 / DSM 20030 / JCM 1464 / CCM 169 / CCUG 5858 / IAM 1056 / NBRC 3333 / NCIMB 9278 / NCTC 2665 / VKM Ac-2230) (Micrococcus lysodeikticus).